Reading from the N-terminus, the 212-residue chain is Large ribosomal subunit protein uL1 (212 aa).

This sequence belongs to the universal ribosomal protein uL1 family. In terms of assembly, part of the 50S ribosomal subunit.

In terms of biological role, binds directly to 23S rRNA. Probably involved in E site tRNA release. Protein L1 is also a translational repressor protein, it controls the translation of its operon by binding to its mRNA. The protein is Large ribosomal subunit protein uL1 of Halobacterium salinarum (strain ATCC 29341 / DSM 671 / R1).